A 190-amino-acid chain; its full sequence is Xanthine phosphoribosyltransferase (190 aa).

Xanthine contacts are provided by Leu20 and Asn27. Residue 128–132 (ANGKA) coordinates 5-phospho-alpha-D-ribose 1-diphosphate. Residue Lys156 participates in xanthine binding.

Belongs to the purine/pyrimidine phosphoribosyltransferase family. Xpt subfamily. As to quaternary structure, homodimer.

It is found in the cytoplasm. It catalyses the reaction XMP + diphosphate = xanthine + 5-phospho-alpha-D-ribose 1-diphosphate. The protein operates within purine metabolism; XMP biosynthesis via salvage pathway; XMP from xanthine: step 1/1. Converts the preformed base xanthine, a product of nucleic acid breakdown, to xanthosine 5'-monophosphate (XMP), so it can be reused for RNA or DNA synthesis. This is Xanthine phosphoribosyltransferase from Stutzerimonas stutzeri (strain A1501) (Pseudomonas stutzeri).